The following is an 83-amino-acid chain: Mu-theraphotoxin-Hhn2j 1 (83 aa).

The first 21 residues, 1-21 (MKASMFLALAGLVLLFVVGYA), serve as a signal peptide directing secretion. The propeptide occupies 22–48 (SESEEKEFPIELLSKIFAVDVFKGEER). 3 disulfides stabilise this stretch: C50/C65, C57/C70, and C64/C77. L81 bears the Leucine amide mark.

This sequence belongs to the neurotoxin 10 (Hwtx-1) family. 15 (Hntx-3) subfamily. In terms of assembly, monomer. Expressed by the venom gland.

The protein localises to the secreted. Its function is as follows. Lethal neurotoxin. Selectively blocks tetrodotoxin-sensitive voltage-gated sodium channels (Nav). Does not affect tetrodotoxin-resistant voltage-gated sodium channels or calcium channels. The polypeptide is Mu-theraphotoxin-Hhn2j 1 (Cyriopagopus hainanus (Chinese bird spider)).